Here is a 196-residue protein sequence, read N- to C-terminus: UPF0319 protein VV0948 (196 aa).

The N-terminal stretch at 1–19 (MKKMMILSALALFSSSLFA) is a signal peptide.

This sequence belongs to the UPF0319 family.

This chain is UPF0319 protein VV0948, found in Vibrio vulnificus (strain YJ016).